Here is a 111-residue protein sequence, read N- to C-terminus: Anti-adapter protein IraM (111 aa).

This sequence belongs to the IraM/RssC family.

It localises to the cytoplasm. Its function is as follows. Inhibits RpoS proteolysis by regulating RssB activity, thereby increasing the stability of the sigma stress factor RpoS during magnesium starvation. The polypeptide is Anti-adapter protein IraM (Escherichia coli O127:H6 (strain E2348/69 / EPEC)).